We begin with the raw amino-acid sequence, 500 residues long: Ent-kaurene oxidase P450-4 (500 aa).

A helical membrane pass occupies residues 6-26 (VHWLIYVAFGAWLCSYVIHVL). Asn240 is a glycosylation site (N-linked (GlcNAc...) asparagine). Cys441 contacts heme. Asn475 carries N-linked (GlcNAc...) asparagine glycosylation.

This sequence belongs to the cytochrome P450 family. It depends on heme as a cofactor.

The protein resides in the membrane. The enzyme catalyses ent-kaur-16-ene + 3 reduced [NADPH--hemoprotein reductase] + 3 O2 = ent-kaur-16-en-19-oate + 3 oxidized [NADPH--hemoprotein reductase] + 4 H2O + 4 H(+). It participates in plant hormone biosynthesis; gibberellin biosynthesis. In terms of biological role, ent-kaurene oxidase; part of the gene cluster that mediates the biosynthesis of gibberellins (GAs), diterpenoids that may provide a selective advantage during infection of the preferred host plant, rice. Gibberellins (GAs) are diterpenoids and are synthesized via the mevalonate pathway. Biosynthesis of the major metabolite GA3 (gibberellic acid) from geranylgeranyl diphosphate (GGPP) requires 13 steps. The GGPP produced by the geranylgeranyl diphosphate synthase GGS2 is converted to ent-kaurene via ent-copalyldiphosphate in a two-step cyclization reaction performed by the bifunctional ent-copalyl diphosphate synthase/ent-kaurene synthase enzyme (CPS/KS). Ent-Kaurene is metabolized to GAs by a series of oxidation reactions catalyzed by cytochrome P450 monooxygenases. Cytochrome P450 monooxygenase P450-4 is an ent-kaurene oxidase that catalyzes the three oxidation steps between ent-kaurene and ent-kaurenoic acid. The highly multifunctional cytochrome P450 monooxygenase P450-1 then catalyzes four steps involving oxidation at two carbon atoms, in the main pathway from ent-kaurenoic acid to GA14 via GA12-aldehyde as well as producing kaurenolides and fujenoic acids as by-products. The cytochrome P450 monooxygenase P450-2 then converts GA14 to GA4 by removal of C-20. GA4 is further converted to GA7 by the GA4 desaturase DES via 1,2-desaturation before cytochrome P450 monooxygenase P450-3, a 13-hydroxylase, hydroxylates GA7 to GA3, the final product of the GA-biosynthetic pathway. The polypeptide is Ent-kaurene oxidase P450-4 (Gibberella fujikuroi (strain CBS 195.34 / IMI 58289 / NRRL A-6831) (Bakanae and foot rot disease fungus)).